A 93-amino-acid chain; its full sequence is Small ribosomal subunit protein uS19 (93 aa).

This sequence belongs to the universal ribosomal protein uS19 family.

In terms of biological role, protein S19 forms a complex with S13 that binds strongly to the 16S ribosomal RNA. The polypeptide is Small ribosomal subunit protein uS19 (Parafrankia sp. (strain EAN1pec)).